Here is a 308-residue protein sequence, read N- to C-terminus: Acetaldehyde dehydrogenase (308 aa).

14-17 (TGNI) serves as a coordination point for NAD(+). The active-site Acyl-thioester intermediate is the Cys-129. NAD(+)-binding positions include 160-168 (SAGPGTRQN) and Asn-280.

This sequence belongs to the acetaldehyde dehydrogenase family.

It carries out the reaction acetaldehyde + NAD(+) + CoA = acetyl-CoA + NADH + H(+). The sequence is that of Acetaldehyde dehydrogenase from Thermomicrobium roseum (strain ATCC 27502 / DSM 5159 / P-2).